The following is a 567-amino-acid chain: Urease subunit alpha (567 aa).

Residues 129-567 (GGIDAHIHFI…LPLAQRYFLF (439 aa)) form the Urease domain. Residues His134, His136, and Lys217 each coordinate Ni(2+). N6-carboxylysine is present on Lys217. His219 serves as a coordination point for substrate. The Ni(2+) site is built by His246 and His272. The active-site Proton donor is His320. Asp360 serves as a coordination point for Ni(2+).

It belongs to the metallo-dependent hydrolases superfamily. Urease alpha subunit family. Heterotrimer of UreA (gamma), UreB (beta) and UreC (alpha) subunits. Three heterotrimers associate to form the active enzyme. Ni cation is required as a cofactor. In terms of processing, carboxylation allows a single lysine to coordinate two nickel ions.

Its subcellular location is the cytoplasm. It carries out the reaction urea + 2 H2O + H(+) = hydrogencarbonate + 2 NH4(+). The protein operates within nitrogen metabolism; urea degradation; CO(2) and NH(3) from urea (urease route): step 1/1. This Hahella chejuensis (strain KCTC 2396) protein is Urease subunit alpha.